The sequence spans 408 residues: Snake venom 5'-nucleotidase (408 aa).

Zn(2+) is bound by residues H54 and H77. N167 and N181 each carry an N-linked (GlcNAc...) asparagine glycan. 2 disulfides stabilise this stretch: C187–C192 and C199–C221. R188 serves as a coordination point for AMP. Positions 224, 229, and 252 each coordinate AMP. Residues C311 and C314 are joined by a disulfide bond. Residues F335 and D341 each coordinate AMP. 2 propeptides (removed in mature form) span residues 385–388 (DGTL) and 385–408 (DGTL…FFIL).

Belongs to the 5'-nucleotidase family. In terms of assembly, homodimer. Venom 5'-nucleotidases (or a part thereof) may be released into the venom via exosome-like vesicles. They may be attached via a GPI anchor to the membrane of these vesicles. Soluble forms of 5'-nucleotidase might be released by cleavage of the ectodomain in the exosome-like vesicles or venom gland cells. As to expression, expressed by the venom gland.

It localises to the membrane. The catalysed reaction is a ribonucleoside 5'-phosphate + H2O = a ribonucleoside + phosphate. The enzyme catalyses AMP + H2O = adenosine + phosphate. It carries out the reaction GMP + H2O = guanosine + phosphate. It catalyses the reaction ADP + H2O = AMP + phosphate + H(+). Is potently inhibited by metal ions Fe(3+), Cu(2+) and Zn(2+). Is enhanced by Mn(2+). Ca(2+) and Mg(2+) have no effect. Its function is as follows. Hydrolyzes nucleotides into nucleosides. Prefers AMP as the substrate but also cleaves GMP and ADP. Does not affect AMP, cAMP and cGMP. Inhibits ADP- and collagen-induced platelet aggregation. Snake venom 5'-nucleotidases are widely distributed among venomous snake taxa, but there is a lack of information about their biological activities. They have been shown to inhibit platelet aggregation. This effect may be due to the liberation of inhibitory AMP or adenosine by its action on ADP released upon initiation of aggregation. Venom 5'-nucleotidases are also known to synergistically act in vivo with other toxins like ADPases, phospholipases, and disintegrins to exert a more pronounced anti-coagulant effect. The polypeptide is Snake venom 5'-nucleotidase (Macrovipera lebetinus (Levantine viper)).